Consider the following 172-residue polypeptide: C-phycocyanin beta subunit (172 aa).

Asn-72 is modified (N4-methylasparagine). (2R,3E)-phycocyanobilin is bound by residues Cys-82 and Cys-153.

Belongs to the phycobiliprotein family. Heterodimer of an alpha and a beta chain, which further assembles into trimers. The trimers assemble into hexamers, although these were not seen in the crystallographic studies. Part of 2 PBS rod complexes, the conventional CpcG-PBS rod and a photosystem I-specific CpcL-PBS rod, both of which include ferredoxin--NADP reductase (petH). Interacts with rod linker CpcC2 via the latter's N-terminal PBS-linker domain. Post-translationally, contains two covalently linked bilin chromophores.

Its subcellular location is the cellular thylakoid membrane. Light-harvesting photosynthetic bile pigment-protein from the phycobiliprotein complex (phycobilisome, PBS). Phycocyanin is the major phycobiliprotein in the PBS rod. In Synechocystis sp. (strain ATCC 27184 / PCC 6803 / Kazusa), this protein is C-phycocyanin beta subunit (cpcB).